The sequence spans 43 residues: TTTVQYDPSEQYQPYPEQQEPFVQQQPPFVQQQQPFVQQQEPF.

The disordered stretch occupies residues 1–23; sequence TTTVQYDPSEQYQPYPEQQEPFV. The segment covering 10–23 has biased composition (low complexity); sequence EQYQPYPEQQEPFV. Copy 1 of the repeat occupies 21–26; it reads PFVQQQ. The interval 21–40 is 3 X 6 aa tandem repeats of P-F-V-Q-Q-Q; it reads PFVQQQPPFVQQQQPFVQQQ. The stretch at 27 to 34 is one 2; approximate repeat; sequence PPFVQQQQ. Residues 35-40 form repeat 3; that stretch reads PFVQQQ.

Belongs to the gliadin/glutenin family. Monomer.

It is found in the vacuole. Its subcellular location is the aleurone grain. Seed storage protein. Serves as a source of nitrogen, carbon, and sulfur for the young developing seedling. The polypeptide is Avenin-F (Avena sativa (Oat)).